Consider the following 210-residue polypeptide: Na(+)-translocating NADH-quinone reductase subunit D (210 aa).

5 consecutive transmembrane segments (helical) span residues 42–62, 72–92, 103–123, 131–151, and 178–198; these read FVMT…VSLI, IIVQ…VLKA, VFVS…AFAM, FIDG…VAFF, and NGLM…IWAI.

The protein belongs to the NqrDE/RnfAE family. As to quaternary structure, composed of six subunits; NqrA, NqrB, NqrC, NqrD, NqrE and NqrF.

It localises to the cell inner membrane. It catalyses the reaction a ubiquinone + n Na(+)(in) + NADH + H(+) = a ubiquinol + n Na(+)(out) + NAD(+). NQR complex catalyzes the reduction of ubiquinone-1 to ubiquinol by two successive reactions, coupled with the transport of Na(+) ions from the cytoplasm to the periplasm. NqrA to NqrE are probably involved in the second step, the conversion of ubisemiquinone to ubiquinol. This Aliivibrio fischeri (strain ATCC 700601 / ES114) (Vibrio fischeri) protein is Na(+)-translocating NADH-quinone reductase subunit D.